Reading from the N-terminus, the 555-residue chain is Serine/threonine-protein kinase Nek4 (555 aa).

Residues 4 to 258 enclose the Protein kinase domain; the sequence is YEVLEQIGKG…ANELLNHPHL (255 aa). Residues 10-18 and Lys33 each bind ATP; that span reads IGKGSFGSA. Catalysis depends on Asp129, which acts as the Proton acceptor. Disordered regions lie at residues 288–328, 346–372, and 443–477; these read LKER…MFNG, QRQEEAKKQSGAARTPRVAGTSAKAST, and NRETASRREVARHSFSSPPCPPHGEDNSNGSITKD. Residues 304–320 are compositionally biased toward polar residues; sequence PSVSDTEAGSVSSSGKA.

This sequence belongs to the protein kinase superfamily. NEK Ser/Thr protein kinase family. NIMA subfamily.

The catalysed reaction is L-seryl-[protein] + ATP = O-phospho-L-seryl-[protein] + ADP + H(+). The enzyme catalyses L-threonyl-[protein] + ATP = O-phospho-L-threonyl-[protein] + ADP + H(+). May be involved in plant development processes. This chain is Serine/threonine-protein kinase Nek4 (NEK4), found in Arabidopsis thaliana (Mouse-ear cress).